A 379-amino-acid chain; its full sequence is Glucose-1-phosphate adenylyltransferase (379 aa).

Residues G164, 179 to 180 (EK), and S190 contribute to the alpha-D-glucose 1-phosphate site.

The protein belongs to the bacterial/plant glucose-1-phosphate adenylyltransferase family. As to quaternary structure, homotetramer.

The enzyme catalyses alpha-D-glucose 1-phosphate + ATP + H(+) = ADP-alpha-D-glucose + diphosphate. The protein operates within glycan biosynthesis; glycogen biosynthesis. Involved in the biosynthesis of ADP-glucose, a building block required for the elongation reactions to produce glycogen. Catalyzes the reaction between ATP and alpha-D-glucose 1-phosphate (G1P) to produce pyrophosphate and ADP-Glc. The chain is Glucose-1-phosphate adenylyltransferase from Streptococcus uberis (strain ATCC BAA-854 / 0140J).